The chain runs to 604 residues: Tyrosine-protein kinase transforming protein erbB (604 aa).

Residues 132–399 (FKKVKVLGSG…KMARDPPRYL (268 aa)) enclose the Protein kinase domain. ATP is bound by residues 138-146 (LGSGAFGTI) and lysine 165. The Proton acceptor role is filled by aspartate 257.

The protein belongs to the protein kinase superfamily. Tyr protein kinase family. EGF receptor subfamily.

It catalyses the reaction L-tyrosyl-[protein] + ATP = O-phospho-L-tyrosyl-[protein] + ADP + H(+). The v-erbB oncogene transforms avian fibroblasts and erythroblasts in culture and induces sarcomas and erythroleukemias in chickens. It is a truncated and mutated version of the receptor for epidermal growth factor. The protein is Tyrosine-protein kinase transforming protein erbB (V-ERBB) of Galliformes.